The primary structure comprises 445 residues: Chromosome partition protein MukF (445 aa).

Residues 213-241 (LSETSATLRELQDTLQAAGDELQTQILDI) are leucine-zipper.

The protein belongs to the MukF family. Interacts, and probably forms a ternary complex, with MukE and MukB via its C-terminal region. The complex formation is stimulated by calcium or magnesium. It is required for an interaction between MukE and MukB.

The protein localises to the cytoplasm. Its subcellular location is the nucleoid. Its function is as follows. Involved in chromosome condensation, segregation and cell cycle progression. May participate in facilitating chromosome segregation by condensation DNA from both sides of a centrally located replisome during cell division. Not required for mini-F plasmid partitioning. Probably acts via its interaction with MukB and MukE. Overexpression results in anucleate cells. It has a calcium binding activity. This chain is Chromosome partition protein MukF, found in Vibrio cholerae serotype O1 (strain ATCC 39541 / Classical Ogawa 395 / O395).